Consider the following 554-residue polypeptide: Folate synthesis bifunctional protein, mitochondrial (554 aa).

Residues 1 to 42 (MAPLLSQTLIHTGRFLLRRFLEPPPAVISAVAASRVCFHRYY) constitute a mitochondrion transit peptide. An HPPK region spans residues 90–215 (VIALGSNIGN…SFVLAPLVDL (126 aa)). One can recognise a Pterin-binding domain in the interval 273 to 541 (THVMGILNLT…NVRHNADAAK (269 aa)). The segment at 275–554 (VMGILNLTPD…AMLRRRRSKG (280 aa)) is DHPS. N280 contacts Mg(2+). (7,8-dihydropterin-6-yl)methyl diphosphate contacts are provided by residues T320, D357, N376, D449, K494, and 529 to 531 (RVH).

It in the N-terminal section; belongs to the HPPK family. In the C-terminal section; belongs to the DHPS family. Requires Mg(2+) as cofactor. In terms of tissue distribution, ubiquitous.

Its subcellular location is the mitochondrion. The enzyme catalyses 6-hydroxymethyl-7,8-dihydropterin + ATP = (7,8-dihydropterin-6-yl)methyl diphosphate + AMP + H(+). It carries out the reaction (7,8-dihydropterin-6-yl)methyl diphosphate + 4-aminobenzoate = 7,8-dihydropteroate + diphosphate. Its pathway is cofactor biosynthesis; tetrahydrofolate biosynthesis; 2-amino-4-hydroxy-6-hydroxymethyl-7,8-dihydropteridine diphosphate from 7,8-dihydroneopterin triphosphate: step 4/4. It participates in cofactor biosynthesis; tetrahydrofolate biosynthesis; 7,8-dihydrofolate from 2-amino-4-hydroxy-6-hydroxymethyl-7,8-dihydropteridine diphosphate and 4-aminobenzoate: step 1/2. Functionally, catalyzes the first two consecutive steps of tetrahydrofolate biosynthesis. The sequence is that of Folate synthesis bifunctional protein, mitochondrial from Arabidopsis thaliana (Mouse-ear cress).